The following is a 304-amino-acid chain: MRPEKSFQGLILTLQRYWADYGCIILQPYDMEVGAGTFHPATTLRALGPKRWNAAYVQPSRRPKDGRYGENPNRLQHYYQFQVILKPSPEDIQDLYLKSLAAIGVDAALHDIRFVEDDWESPTLGAWGLGWECWCDGMEVSQFTYFQQVAGVECAPVAGELTYGLERLAMYVQGVDNVYDLNFNGRDGAEKVTYGDVFLQAEQEYSRHNFEHADTAMLFEQFKMAEGACKKYLDAGWASDKKDKHLMALPAYDQCIKASHVFNLLDARGVISVTERQSYILRVRELAKACGEAWIHTEAGGVRG.

Belongs to the class-II aminoacyl-tRNA synthetase family. Tetramer of two alpha and two beta subunits.

It is found in the cytoplasm. It carries out the reaction tRNA(Gly) + glycine + ATP = glycyl-tRNA(Gly) + AMP + diphosphate. This Afipia carboxidovorans (strain ATCC 49405 / DSM 1227 / KCTC 32145 / OM5) (Oligotropha carboxidovorans) protein is Glycine--tRNA ligase alpha subunit.